A 413-amino-acid chain; its full sequence is Putative glutamate--cysteine ligase 2 (413 aa).

Residues 392–413 (GGVCALSTPQGDPLPGWAERLH) are disordered.

The protein belongs to the glutamate--cysteine ligase type 2 family. YbdK subfamily.

It catalyses the reaction L-cysteine + L-glutamate + ATP = gamma-L-glutamyl-L-cysteine + ADP + phosphate + H(+). In terms of biological role, ATP-dependent carboxylate-amine ligase which exhibits weak glutamate--cysteine ligase activity. The sequence is that of Putative glutamate--cysteine ligase 2 from Bordetella bronchiseptica (strain ATCC BAA-588 / NCTC 13252 / RB50) (Alcaligenes bronchisepticus).